The chain runs to 413 residues: Serine/threonine-protein phosphatase 2A 55 kDa regulatory subunit B beta isoform (413 aa).

WD repeat units follow at residues 1–31, 57–98, 141–179, and 190–230; these read EFNHTGELLATGDKGGRVVIFQREQESKNQV, EIEE…KRPE, AHTYHINSISVNSDYETYMSADDLRINLWNFEITNQSFN, and ELTE…LCDR. Ser-245 bears the Phosphoserine mark. WD repeat units lie at residues 249 to 287, 304 to 345, and 380 to 412; these read EIISSISDVKFSHSGRYIMTRDYLTVKVWDLNMENRPIE, ENDC…DVTL, and DFSKKILHTAWHPSENIIAVAATNNLYIFQDKV. Tyr-265 is modified (phosphotyrosine). Position 268 is a phosphothreonine (Thr-268).

This sequence belongs to the phosphatase 2A regulatory subunit B family. PP2A consists of a common heterodimeric core enzyme, composed of a 36 kDa catalytic subunit (subunit C) and a 65 kDa constant regulatory subunit (PR65 or subunit A), that associates with a variety of regulatory subunits. Proteins that associate with the core dimer include three families of regulatory subunits B (the R2/B/PR55/B55, R3/B''/PR72/PR130/PR59 and R5/B'/B56 families), the 48 kDa variable regulatory subunit, viral proteins, and cell signaling molecules. Interacts with TOMM22. Interacts with IER5 (via N- and C-terminal regions). As to expression, brain.

It is found in the cytoplasm. The protein localises to the cytoskeleton. The protein resides in the membrane. Functionally, the B regulatory subunit might modulate substrate selectivity and catalytic activity, and might also direct the localization of the catalytic enzyme to a particular subcellular compartment. This is Serine/threonine-protein phosphatase 2A 55 kDa regulatory subunit B beta isoform (PPP2R2B) from Oryctolagus cuniculus (Rabbit).